The following is a 289-amino-acid chain: uncharacterized protein (289 aa).

The 58-residue stretch at 1–58 (MDEKDWILLKILHEEQSVTKTAERLFTSQPSITYRLKKIEEIFGIELFTKRHKGITFT) folds into the HTH lysR-type domain. Positions 18-37 (VTKTAERLFTSQPSITYRLK) form a DNA-binding region, H-T-H motif.

Belongs to the LysR transcriptional regulatory family.

This is an uncharacterized protein from Bacillus subtilis (strain 168).